The following is a 564-amino-acid chain: Iron-sensing transcriptional repressor (564 aa).

The GATA-type 1 zinc finger occupies 12 to 36 (CSNCHKTTTSLWRRGPDNSLLCNAC). A disordered region spans residues 100-170 (ASKSQSGRKS…SSPPHEPSVT (71 aa)). S109 carries the phosphoserine modification. The segment covering 109-120 (SLSPNPSSVPSS) has biased composition (low complexity). Residues 135–148 (QIVSDTTTETSNGT) show a composition bias toward polar residues. The GATA-type 2 zinc finger occupies 172–196 (CQNCATTNTPLWRRDESGNPICNAC). Disordered regions lie at residues 226–285 (GNAN…NTGV), 381–409 (DSSKQLSESTTSNTDNNGVATANQSNPLG), and 443–496 (LLNP…VQGS). Composition is skewed to polar residues over residues 240–253 (SGDSGSSVKQQSTR), 260–271 (SFPNGNGHASGN), 381–407 (DSSKQLSESTTSNTDNNGVATANQSNP), and 450–486 (PSNSDKQPSMSNGPKSEVSPSQSQQAPLIQSSTSPVS).

Interacts with tup11.

It localises to the nucleus. Its activity is regulated as follows. Activated by iron. Functionally, transcriptional repressor that binds the consensus promoter sequence 5'-[AT]GATAA-3' during iron-replete conditions to down-regulate transcription of target genes. Represses the expression of the iron transporter fio1 in response to high iron concentrations. Also represses the expression of str1, str2 and str3. Represses the expression of shu1 in presence of iron. This Schizosaccharomyces pombe (strain 972 / ATCC 24843) (Fission yeast) protein is Iron-sensing transcriptional repressor.